The sequence spans 606 residues: Cryptochrome-1 (606 aa).

In terms of domain architecture, Photolyase/cryptochrome alpha/beta spans valine 3–leucine 132. Residue lysine 11 forms a Glycyl lysine isopeptide (Lys-Gly) (interchain with G-Cter in ubiquitin) linkage. Residues asparagine 50–phenylalanine 54 carry the LIR 1 motif. Serine 71 carries the phosphoserine; by AMPK modification. The LIR 2 signature appears at aspartate 82–leucine 87. Residue lysine 107 forms a Glycyl lysine isopeptide (Lys-Gly) (interchain with G-Cter in ubiquitin) linkage. An LIR 3 motif is present at residues lysine 151–leucine 156. A Glycyl lysine isopeptide (Lys-Gly) (interchain with G-Cter in ubiquitin) cross-link involves residue lysine 159. Serine 247 carries the post-translational modification Phosphoserine; by MAPK. Residue serine 252 coordinates FAD. 2 consecutive short sequence motifs (LIR) follow at residues leucine 255–leucine 260 and aspartate 271–valine 276. Serine 280 is modified (phosphoserine; by AMPK). An LIR 6 motif is present at residues serine 285–leucine 290. Glutamine 289 is an FAD binding site. Lysine 329 participates in a covalent cross-link: Glycyl lysine isopeptide (Lys-Gly) (interchain with G-Cter in ubiquitin). The short motif at threonine 335–tryptophan 339 is the LIR 7 element. Histidine 355 serves as a coordination point for FAD. The segment at tryptophan 371–methionine 470 is required for inhibition of CLOCK-BMAL1-mediated transcription. The LIR 8 motif lies at lysine 379 to leucine 384. Aspartate 387–aspartate 389 contributes to the FAD binding site. Short sequence motifs (LIR) lie at residues glycine 395–leucine 400, histidine 411–valine 416, and arginine 430–valine 435. The segment at valine 471 to arginine 493 is interaction with TIMELESS. Lysine 485 is covalently cross-linked (Glycyl lysine isopeptide (Lys-Gly) (interchain with G-Cter in ubiquitin)). 2 consecutive short sequence motifs (LIR) follow at residues glutamine 486 to leucine 491 and serine 492 to leucine 497. The disordered stretch occupies residues tyrosine 559–asparagine 606. Residues aspartate 563–arginine 586 are compositionally biased toward polar residues. Residue lysine 585 forms a Glycyl lysine isopeptide (Lys-Gly) (interchain with G-Cter in ubiquitin) linkage. Position 588 is a phosphoserine (serine 588).

This sequence belongs to the DNA photolyase class-1 family. As to quaternary structure, component of the circadian core oscillator, which includes the CRY proteins, CLOCK or NPAS2, BMAL1 or BMAL2, CSNK1D and/or CSNK1E, TIMELESS, and the PER proteins. Interacts directly with TIMELESS. Interacts directly with PER1 and PER2; interaction with PER2 inhibits its ubiquitination and vice versa. Interacts with PER3. Interacts with FBXL21. Interacts with FBXL3. Interacts with PPP5C (via TPR repeats). Interacts with CLOCK-BMAL1 independently of PER2 and DNA. Interacts with HDAC1, HDAC2 and SIN3B. Interacts with nuclear receptors AR, NR1D1, NR3C1/GR, RORA and RORC; the interaction with at least NR3C1/GR is ligand dependent. Interacts with PRKDC. Interacts with the G protein subunit alpha GNAS; the interaction may block GPCR-mediated regulation of cAMP concentrations. Interacts with PRMT5. Interacts with EZH2. Interacts with MYBBP1A, DOCK7, HNRNPU, RPL7A, RPL8 and RPS3. Interacts with MAP1LC3B. Interacts with CLOCK. Interacts with BMAL1. Interacts weakly with HDAC3; this interaction is enhanced in the presence of FBXL3. Interacts with TRIM28, KCTD5 and DDB1. Interacts with DTL. Interacts with DDB1-CUL4A complex. Interacts with FOXO1. Interacts with PSMD2 in a KDM8-dependent manner. Interacts with KDM8 in a FBXL3-dependent manner. Interacts with PPARA. Interacts with PPARG in a ligand-dependent manner. Interacts with PPARD (via domain NR LBD) in a ligand-dependent manner. Interacts with NR1I2 (via domain NR LBD) in a ligand-dependent manner. Interacts with NR1I3, VDR and HNF4A. The cofactor is FAD. (6R)-5,10-methylene-5,6,7,8-tetrahydrofolate serves as cofactor. Phosphorylation on Ser-247 by MAPK is important for the inhibition of CLOCK-BMAL1-mediated transcriptional activity. Phosphorylation by CSNK1E requires interaction with PER1 or PER2. Phosphorylation at Ser-71 and Ser-280 by AMPK decreases protein stability. Phosphorylation at Ser-588 exhibits a robust circadian rhythm with a peak at CT8, increases protein stability, prevents SCF(FBXL3)-mediated degradation and is antagonized by interaction with PRKDC. Post-translationally, ubiquitinated by the SCF(FBXL3) and SCF(FBXL21) complexes, regulating the balance between degradation and stabilization. The SCF(FBXL3) complex is mainly nuclear and mediates ubiquitination and subsequent degradation of CRY1. In contrast, cytoplasmic SCF(FBXL21) complex-mediated ubiquitination leads to stabilize CRY1 and counteract the activity of the SCF(FBXL3) complex. The SCF(FBXL3) and SCF(FBXL21) complexes probably mediate ubiquitination at different Lys residues. Ubiquitination at Lys-11 and Lys-107 are specifically ubiquitinated by the SCF(FBXL21) complex but not by the SCF(FBXL3) complex. Ubiquitination may be inhibited by PER2. Deubiquitinated by USP7. In terms of processing, undergoes autophagy-mediated degradation in the liver in a time-dependent manner. Autophagic degradation of CRY1 (an inhibitor of gluconeogenesis) occurs during periods of reduced feeding allowing induction of gluconeogenesis and maintenance of blood glucose levels. In terms of tissue distribution, expressed in cones, amacrine cells, and retinal ganglion cells of the retina (at protein level). Expressed in all tissues examined including heart, brain, spleen, lung, liver, skeletal muscle, kidney and testis. Higher levels in brain, liver and testis. In the retina, highly expressed in the ganglion cell layer (GCL) and in the inner nuclear layer (INL). Evenly distributed in central and peripheral retina. In the brain, highly expressed in the suprachiasmatic nucleus (SCN). High levels in cerebral cortical layers particularly in the pyramidial cell layer of the hippocampus, the granular cell layer of the dentate gyrus (DG) and the pyramidal cell layer of the piriform cortex (PFC).

It is found in the cytoplasm. The protein resides in the nucleus. KL001 (N-[3-(9H-carbazol-9-yl)-2-hydroxypropyl]-N-(2-furanylmethyl)-methanesulfonamide) binds to CRY1 and stabilizes it by inhibiting FBXL3- and ubiquitin-dependent degradation of CRY1 resulting in lengthening of the circadian periods. KL001-mediated CRY1 stabilization can inhibit glucagon-induced gluconeogenesis in primary hepatocytes. Transcriptional repressor which forms a core component of the circadian clock. The circadian clock, an internal time-keeping system, regulates various physiological processes through the generation of approximately 24 hour circadian rhythms in gene expression, which are translated into rhythms in metabolism and behavior. It is derived from the Latin roots 'circa' (about) and 'diem' (day) and acts as an important regulator of a wide array of physiological functions including metabolism, sleep, body temperature, blood pressure, endocrine, immune, cardiovascular, and renal function. Consists of two major components: the central clock, residing in the suprachiasmatic nucleus (SCN) of the brain, and the peripheral clocks that are present in nearly every tissue and organ system. Both the central and peripheral clocks can be reset by environmental cues, also known as Zeitgebers (German for 'timegivers'). The predominant Zeitgeber for the central clock is light, which is sensed by retina and signals directly to the SCN. The central clock entrains the peripheral clocks through neuronal and hormonal signals, body temperature and feeding-related cues, aligning all clocks with the external light/dark cycle. Circadian rhythms allow an organism to achieve temporal homeostasis with its environment at the molecular level by regulating gene expression to create a peak of protein expression once every 24 hours to control when a particular physiological process is most active with respect to the solar day. Transcription and translation of core clock components (CLOCK, NPAS2, BMAL1, BMAL2, PER1, PER2, PER3, CRY1 and CRY2) plays a critical role in rhythm generation, whereas delays imposed by post-translational modifications (PTMs) are important for determining the period (tau) of the rhythms (tau refers to the period of a rhythm and is the length, in time, of one complete cycle). A diurnal rhythm is synchronized with the day/night cycle, while the ultradian and infradian rhythms have a period shorter and longer than 24 hours, respectively. Disruptions in the circadian rhythms contribute to the pathology of cardiovascular diseases, cancer, metabolic syndromes and aging. A transcription/translation feedback loop (TTFL) forms the core of the molecular circadian clock mechanism. Transcription factors, CLOCK or NPAS2 and BMAL1 or BMAL2, form the positive limb of the feedback loop, act in the form of a heterodimer and activate the transcription of core clock genes and clock-controlled genes (involved in key metabolic processes), harboring E-box elements (5'-CACGTG-3') within their promoters. The core clock genes: PER1/2/3 and CRY1/2 which are transcriptional repressors form the negative limb of the feedback loop and interact with the CLOCK|NPAS2-BMAL1|BMAL2 heterodimer inhibiting its activity and thereby negatively regulating their own expression. This heterodimer also activates nuclear receptors NR1D1/2 and RORA/B/G, which form a second feedback loop and which activate and repress BMAL1 transcription, respectively. CRY1 and CRY2 have redundant functions but also differential and selective contributions at least in defining the pace of the SCN circadian clock and its circadian transcriptional outputs. More potent transcriptional repressor in cerebellum and liver than CRY2, though more effective in lengthening the period of the SCN oscillator. On its side, CRY2 seems to play a critical role in tuning SCN circadian period by opposing the action of CRY1. With CRY2, is dispensable for circadian rhythm generation but necessary for the development of intercellular networks for rhythm synchrony. Capable of translocating circadian clock core proteins such as PER proteins to the nucleus. Interacts with CLOCK-BMAL1 independently of PER proteins and is found at CLOCK-BMAL1-bound sites, suggesting that CRY may act as a molecular gatekeeper to maintain CLOCK-BMAL1 in a poised and repressed state until the proper time for transcriptional activation. Represses the CLOCK-BMAL1 induced transcription of BHLHE40/DEC1, ATF4, MTA1, KLF10 and NAMPT. May repress circadian target genes expression in collaboration with HDAC1 and HDAC2 through histone deacetylation. Mediates the clock-control activation of ATR and modulates ATR-mediated DNA damage checkpoint. In liver, mediates circadian regulation of cAMP signaling and gluconeogenesis by binding to membrane-coupled G proteins and blocking glucagon-mediated increases in intracellular cAMP concentrations and CREB1 phosphorylation. Inhibits hepatic gluconeogenesis by decreasing nuclear FOXO1 levels that down-regulates gluconeogenic gene expression. Besides its role in the maintenance of the circadian clock, is also involved in the regulation of other processes. Represses glucocorticoid receptor NR3C1/GR-induced transcriptional activity by binding to glucocorticoid response elements (GREs). Plays a key role in glucose and lipid metabolism modulation, in part, through the transcriptional regulation of genes involved in these pathways, such as LEP or ACSL4. Represses PPARD and its target genes in the skeletal muscle and limits exercise capacity. Plays an essential role in the generation of circadian rhythms in the retina. Represses the transcriptional activity of NR1I2. The sequence is that of Cryptochrome-1 (Cry1) from Mus musculus (Mouse).